A 325-amino-acid chain; its full sequence is Tyrosine phosphatase H2 (325 aa).

One can recognise a Tyrosine-protein phosphatase domain in the interval 27–295 (VTREHEKIMA…FFCYRVMERY (269 aa)). Residue cysteine 236 is the Phosphocysteine intermediate of the active site.

This sequence belongs to the protein-tyrosine phosphatase family.

Its subcellular location is the host cytoplasm. It carries out the reaction O-phospho-L-tyrosyl-[protein] + H2O = L-tyrosyl-[protein] + phosphate. Suppresses host immune cell adhesion and phagocytosis. Triggers host mitochondrial membrane depolarization and caspase-dependent apoptosis. The polypeptide is Tyrosine phosphatase H2 (H2) (Microplitis demolitor bracovirus (isolate Webb) (MdBV)).